Consider the following 469-residue polypeptide: Sulfate adenylyltransferase subunit 1 (469 aa).

The tr-type G domain maps to 22–236; it reads KDMLRVLTCG…LLNTVSVEQD (215 aa). Residues 31–38 are G1; that stretch reads GSVDDGKS. Residue 31-38 participates in GTP binding; it reads GSVDDGKS. Residues 89 to 93 are G2; the sequence is GITID. The segment at 110–113 is G3; that stretch reads DTPG. GTP is bound by residues 110–114 and 165–168; these read DTPGH and NKMD. Positions 165 to 168 are G4; the sequence is NKMD. Residues 202-204 are G5; sequence SAL.

It belongs to the TRAFAC class translation factor GTPase superfamily. Classic translation factor GTPase family. CysN/NodQ subfamily. As to quaternary structure, heterodimer composed of CysD, the smaller subunit, and CysN.

The enzyme catalyses sulfate + ATP + H(+) = adenosine 5'-phosphosulfate + diphosphate. It functions in the pathway sulfur metabolism; hydrogen sulfide biosynthesis; sulfite from sulfate: step 1/3. Functionally, with CysD forms the ATP sulfurylase (ATPS) that catalyzes the adenylation of sulfate producing adenosine 5'-phosphosulfate (APS) and diphosphate, the first enzymatic step in sulfur assimilation pathway. APS synthesis involves the formation of a high-energy phosphoric-sulfuric acid anhydride bond driven by GTP hydrolysis by CysN coupled to ATP hydrolysis by CysD. This chain is Sulfate adenylyltransferase subunit 1, found in Shewanella woodyi (strain ATCC 51908 / MS32).